Here is a 635-residue protein sequence, read N- to C-terminus: Threonine--tRNA ligase (635 aa).

The TGS domain maps to 1–58 (MIHVTCNQEAFELPEGASAMDLANKMKQSHCFAGALINDQEKDLSTTLQDGDTVLFLT). The catalytic stretch occupies residues 237 to 528 (DHRVLGTKLD…LIEHFKGRFP (292 aa)). Zn(2+) contacts are provided by Cys328, His379, and His505.

Belongs to the class-II aminoacyl-tRNA synthetase family. As to quaternary structure, homodimer. The cofactor is Zn(2+).

It localises to the cytoplasm. It carries out the reaction tRNA(Thr) + L-threonine + ATP = L-threonyl-tRNA(Thr) + AMP + diphosphate + H(+). Its function is as follows. Catalyzes the attachment of threonine to tRNA(Thr) in a two-step reaction: L-threonine is first activated by ATP to form Thr-AMP and then transferred to the acceptor end of tRNA(Thr). Also edits incorrectly charged L-seryl-tRNA(Thr). This is Threonine--tRNA ligase from Chlamydia trachomatis serovar A (strain ATCC VR-571B / DSM 19440 / HAR-13).